Reading from the N-terminus, the 388-residue chain is Flavin oxidoreductase hxnT (388 aa).

The protein belongs to the NADH:flavin oxidoreductase/NADH oxidase family. It depends on FMN as a cofactor.

In terms of biological role, flavin oxidoreductase, part of the hnx cluster involved in the purine degradation. The nicotinate hydroxylase hnxS accepts nicotinate as a substrate and catalyzes the first step of nicotinate catabolism. The major facilitator-type transporters hxnP and hxnZ are probably involved in the uptake of nicotinate-derived metabolites, and the oxidoreductases hxnT and hxnY in the further metabolism of 6-OH nicotinic acid. The polypeptide is Flavin oxidoreductase hxnT (Emericella nidulans (strain FGSC A4 / ATCC 38163 / CBS 112.46 / NRRL 194 / M139) (Aspergillus nidulans)).